A 71-amino-acid chain; its full sequence is uncharacterized protein (71 aa).

The protein localises to the mitochondrion matrix. It is found in the kinetoplast. This is an uncharacterized protein from Trypanosoma brucei brucei.